Here is a 253-residue protein sequence, read N- to C-terminus: Tryptophan synthase alpha chain (253 aa).

Active-site proton acceptor residues include E45 and D56.

The protein belongs to the TrpA family. As to quaternary structure, tetramer of two alpha and two beta chains.

It catalyses the reaction (1S,2R)-1-C-(indol-3-yl)glycerol 3-phosphate + L-serine = D-glyceraldehyde 3-phosphate + L-tryptophan + H2O. It participates in amino-acid biosynthesis; L-tryptophan biosynthesis; L-tryptophan from chorismate: step 5/5. Functionally, the alpha subunit is responsible for the aldol cleavage of indoleglycerol phosphate to indole and glyceraldehyde 3-phosphate. This chain is Tryptophan synthase alpha chain, found in Flavobacterium psychrophilum (strain ATCC 49511 / DSM 21280 / CIP 103535 / JIP02/86).